The primary structure comprises 412 residues: Double C2-like domain-containing protein beta (412 aa).

The tract at residues 1 to 36 (MTLRRRGEKATISIQEHMAIDVCPGPIRPIKQISDY) is negatively regulates targeting to plasma membrane. Residues 1-90 (MTLRRRGEKA…EDVDQLFGAY (90 aa)) form a mediates interaction with DYNLT1 region. The interval 38-123 (PRFPRGLPPD…PDADGYESDD (86 aa)) is disordered. The segment covering 49-70 (GPRAAAPPDAPARPAVAGAGRR) has biased composition (low complexity). Pro residues predominate over residues 95–108 (GPSPGPSPARPPAK). Positions 112–123 (DEPDADGYESDD) are enriched in acidic residues. C2 domains are found at residues 126–250 (ALGT…SICL) and 266–399 (ERGR…ERWH). Ca(2+) contacts are provided by D157, D163, D218, D220, D297, D303, D357, D359, and D365. Positions 257 to 375 (DKTEDKSLEE…FIGGVVLGIH (119 aa)) are mediates interaction with STXBP3. S411 carries the phosphoserine modification.

As to quaternary structure, interacts with the SNARE (soluble N-ethylmaleimide-sensitive factor attached protein receptor) complex composed of SNAP25, STX1A and VAMP2; the interaction is calcium-dependent and competitive with SYT1. Interacts with STX4; the interaction is calcium-dependent, increased by insulin and glucose, and mediates vesicle fusion with plasma membrane in pancreatic cells and adipocytes. Interacts with STXBP3; the interaction is direct, occurs at the cell membrane and regulates glucose-stimulated insulin secretion. May interact with UNC13A; the interaction mediates targeting to the plasma membrane. Interacts with cytoplasmic dynein light chain DYNLT1. The cofactor is Ca(2+). Widely expressed with highest levels in brain and kidney. Expressed in pancreatic islet cells (at protein level).

It is found in the cytoplasm. The protein resides in the cytoplasmic granule. Its subcellular location is the cell membrane. In terms of biological role, calcium sensor which positively regulates SNARE-dependent fusion of vesicles with membranes. Binds phospholipids in a calcium-dependent manner and may act at the priming stage of fusion by modifying membrane curvature to stimulate fusion. Involved in calcium-triggered exocytosis in chromaffin cells and calcium-dependent spontaneous release of neurotransmitter in absence of action potentials in neuronal cells. Involved both in glucose-stimulated insulin secretion in pancreatic cells and insulin-dependent GLUT4 transport to the plasma membrane in adipocytes. This Homo sapiens (Human) protein is Double C2-like domain-containing protein beta.